The sequence spans 521 residues: GRAS family protein RAD1 (521 aa).

In terms of domain architecture, GRAS spans 137–520; it reads DGSCADGMRL…KPIVAVSCWK (384 aa). The interval 144–212 is leucine repeat I (LRI); the sequence is MRLVQLLIAC…PIGNNSAGSD (69 aa). The VHIID stretch occupies residues 231–301; sequence FKLVYENCPH…HRVRRLRITA (71 aa). Residues 262–266 carry the VHIID motif; it reads LHVVD. A leucine repeat II (LRII) region spans residues 311-343; it reads VIGEELSIYAKNLGIHLEFSIVEKNLENLKPKD. The PFYRE stretch occupies residues 352–443; the sequence is LVVNSILQLH…QFYFAEEIKN (92 aa). The interval 446–520 is SAW; sequence SCEGPLRMER…KPIVAVSCWK (75 aa).

The protein belongs to the GRAS family. In terms of assembly, interacts with RAM1. Interacts with NSP2.

It is found in the nucleus. Its function is as follows. Transcription factor acting as a regulator of arbuscular mycorrhiza (AM)-related genes (e.g. STR). Required for the morphogenesis of arbuscules upon symbiosis with AM fungi (e.g. Glomus versiforme). Also involved in restricting mycorrhizal colonization of the root meristem. The sequence is that of GRAS family protein RAD1 from Medicago truncatula (Barrel medic).